Reading from the N-terminus, the 538-residue chain is Sterile alpha motif domain-containing protein 1 (538 aa).

Residues 1-11 show a composition bias toward pro residues; that stretch reads MAGPPALPPPE. 2 disordered regions span residues 1–30 and 92–247; these read MAGP…ASPH and SYRN…GAAR. Residues 12 to 29 are compositionally biased toward low complexity; the sequence is TAAAATTAAAASSSAASP. The 77-residue stretch at 23–99 folds into the SAMD1-like winged helix (WH) domain; it reads SSSAASPHYQ…SISYRNAARV (77 aa). Thr-107 bears the Phosphothreonine mark. Low complexity predominate over residues 115–125; it reads PRGAPAAAAAA. Positions 126-139 are enriched in pro residues; that stretch reads APPPTPAPPPPPAP. Residues 140-158 are compositionally biased toward low complexity; the sequence is VAAAAPARAPRAAAAAATA. Ser-161 carries the phosphoserine modification. Residues 168–177 show a composition bias toward low complexity; the sequence is GPRAQRAAPL. Residues 178-236 are compositionally biased toward pro residues; sequence AAPPPAPAAPPAVAPPAGPRRAPPPAVAAREPPLPPPPQPPAPPQQQQPPPPQPQPPPE. The segment covering 237–247 has biased composition (low complexity); that stretch reads GGAVRAGGAAR. The residue at position 261 (Ser-261) is a Phosphoserine. The span at 282–291 shows a compositional bias: basic and acidic residues; the sequence is AARGRLERTR. A disordered region spans residues 282 to 458; it reads AARGRLERTR…PPGRKEKPSD (177 aa). Residues 328–351 are compositionally biased toward acidic residues; sequence KEEEEDDDEDEDEEDDVSEGSEVP. A compositionally biased stretch (pro residues) spans 425–436; that stretch reads SPSPVPLPPGKP. The SAM domain maps to 462–530; that stretch reads WTVMDVVEYF…KVLQQGHFED (69 aa).

As to quaternary structure, homopolymerize into a closed pentameric ring. Interacts (via SAM domain) with L3MBTL3 (via SAM domain); the interaction mediates L3MBTL3 binding to chromatin. Interacts (via WH domain) with KDM1A; the interaction modulates KDM1A function. Expressed in atherosclerotic lesions, not in normal intima. Expressed in foam cells.

The protein localises to the nucleus. The protein resides in the chromosome. It is found in the secreted. Functionally, unmethylated CpG islands (CGIs)-binding protein which localizes to H3K4me3-decorated CGIs, where it acts as a transcriptional repressor. Tethers L3MBTL3 to chromatin and interacts with the KDM1A histone demethylase complex to modulate H3K4me2 and H3K4me3 levels at CGIs. Plays a role in atherogenesis by binding with LDL on cell surface and promoting LDL oxidation which leads to the formation of foam cell. This is Sterile alpha motif domain-containing protein 1 from Homo sapiens (Human).